The following is a 212-amino-acid chain: MKKKMIPTTILLSALIFSLSPICEAVWLTVPHTGSKCVSEEIQSNVIVLADYLVISEEHSIFPTVSVKVTAPYGTVLHHRENTTNGQFAFTTQESGTYLACFEADAKSHGNKDFSINIDWKTGIAAKDWDSIARKEKIEGVELEFKKLEGAVEAIHENLIYLRNREAEMRIVSEKTNSRVAWYSIMSLGICIVVSGLQILYLKQYFEKKKLI.

An N-terminal signal peptide occupies residues 1-25 (MKKKMIPTTILLSALIFSLSPICEA). At 26 to 179 (VWLTVPHTGS…RIVSEKTNSR (154 aa)) the chain is on the lumenal side. Residues 35–147 (SKCVSEEIQS…IEGVELEFKK (113 aa)) enclose the GOLD domain. N82 carries an N-linked (GlcNAc...) asparagine glycan. Positions 133-155 (ARKEKIEGVELEFKKLEGAVEAI) form a coiled coil. An omega-N-methylated arginine mark is found at R165 and R170. A helical membrane pass occupies residues 180-200 (VAWYSIMSLGICIVVSGLQIL). Topologically, residues 201–212 (YLKQYFEKKKLI) are cytoplasmic. Residues 205–206 (YF) carry the COPII vesicle coat-binding motif. Residues 205–212 (YFEKKKLI) carry the COPI vesicle coat-binding motif.

It belongs to the EMP24/GP25L family. Probably oligomerizes with other members of the EMP24/GP25L family. Associates with the COPI vesicle coat (coatomer). Associates with the COPII vesicle coat (coatomer).

The protein resides in the endoplasmic reticulum membrane. The protein localises to the golgi apparatus membrane. Its function is as follows. Involved in vesicular protein trafficking. Mainly functions in the early secretory pathway. Required for trafficking GLL23, a component of the PYK10 complex. May act as a receptor facilitating its packing into COPII carriers and export from the endoplasmic reticulum. The polypeptide is Transmembrane emp24 domain-containing protein p24delta4 (CYB) (Arabidopsis thaliana (Mouse-ear cress)).